The sequence spans 236 residues: Small ribosomal subunit protein uS2c (236 aa).

Belongs to the universal ribosomal protein uS2 family.

It localises to the plastid. The protein localises to the chloroplast. In Oryza nivara (Indian wild rice), this protein is Small ribosomal subunit protein uS2c (rps2).